Here is a 286-residue protein sequence, read N- to C-terminus: ATP synthase gamma chain (286 aa).

The protein belongs to the ATPase gamma chain family. As to quaternary structure, F-type ATPases have 2 components, CF(1) - the catalytic core - and CF(0) - the membrane proton channel. CF(1) has five subunits: alpha(3), beta(3), gamma(1), delta(1), epsilon(1). CF(0) has three main subunits: a, b and c.

The protein resides in the cell inner membrane. Its function is as follows. Produces ATP from ADP in the presence of a proton gradient across the membrane. The gamma chain is believed to be important in regulating ATPase activity and the flow of protons through the CF(0) complex. In Shewanella amazonensis (strain ATCC BAA-1098 / SB2B), this protein is ATP synthase gamma chain.